The sequence spans 200 residues: Adenine phosphoribosyltransferase (200 aa).

The protein belongs to the purine/pyrimidine phosphoribosyltransferase family. In terms of assembly, homodimer.

It is found in the cytoplasm. The enzyme catalyses AMP + diphosphate = 5-phospho-alpha-D-ribose 1-diphosphate + adenine. It participates in purine metabolism; AMP biosynthesis via salvage pathway; AMP from adenine: step 1/1. In terms of biological role, catalyzes a salvage reaction resulting in the formation of AMP, that is energically less costly than de novo synthesis. The sequence is that of Adenine phosphoribosyltransferase from Sorangium cellulosum (strain So ce56) (Polyangium cellulosum (strain So ce56)).